The primary structure comprises 156 residues: SsrA-binding protein (156 aa).

Residues 130–156 (KFDKRDDLKKKDAKRDIDRALRDKQKY) are disordered. Residues 132–156 (DKRDDLKKKDAKRDIDRALRDKQKY) are compositionally biased toward basic and acidic residues.

It belongs to the SmpB family.

The protein localises to the cytoplasm. In terms of biological role, required for rescue of stalled ribosomes mediated by trans-translation. Binds to transfer-messenger RNA (tmRNA), required for stable association of tmRNA with ribosomes. tmRNA and SmpB together mimic tRNA shape, replacing the anticodon stem-loop with SmpB. tmRNA is encoded by the ssrA gene; the 2 termini fold to resemble tRNA(Ala) and it encodes a 'tag peptide', a short internal open reading frame. During trans-translation Ala-aminoacylated tmRNA acts like a tRNA, entering the A-site of stalled ribosomes, displacing the stalled mRNA. The ribosome then switches to translate the ORF on the tmRNA; the nascent peptide is terminated with the 'tag peptide' encoded by the tmRNA and targeted for degradation. The ribosome is freed to recommence translation, which seems to be the essential function of trans-translation. The polypeptide is SsrA-binding protein (Exiguobacterium sibiricum (strain DSM 17290 / CCUG 55495 / CIP 109462 / JCM 13490 / 255-15)).